A 274-amino-acid chain; its full sequence is Envelope glycoprotein L (274 aa).

Positions M1–S21 are cleaved as a signal peptide. The 201-residue stretch at V51–V251 folds into the gL betaherpesvirus-type domain. An intrachain disulfide couples C156 to C161.

Belongs to the herpesviridae glycoprotein L (gL) family. Betaherpesvirinae gL subfamily. Interacts with glycoprotein H (gH); this interaction is necessary for the correct processing and cell surface expression of gH.

It localises to the virion membrane. Its subcellular location is the host cell membrane. The protein localises to the host Golgi apparatus. The protein resides in the host trans-Golgi network. The heterodimer glycoprotein H-glycoprotein L is required for the fusion of viral and plasma membranes leading to virus entry into the host cell. Acts as a functional inhibitor of gH and maintains gH in an inhibited form. Upon binding to host integrins, gL dissociates from gH leading to activation of the viral fusion glycoproteins gB and gH. The chain is Envelope glycoprotein L from Mus musculus (Mouse).